The primary structure comprises 90 residues: Small ribosomal subunit protein uS19 (90 aa).

It belongs to the universal ribosomal protein uS19 family.

Its function is as follows. Protein S19 forms a complex with S13 that binds strongly to the 16S ribosomal RNA. The chain is Small ribosomal subunit protein uS19 from Methylococcus capsulatus (strain ATCC 33009 / NCIMB 11132 / Bath).